A 626-amino-acid polypeptide reads, in one-letter code: Mitogen-activated protein kinase kinase kinase 3 (626 aa).

The PB1 domain maps to 44 to 123 (DVRIKFEHNG…KSLRILLLSQ (80 aa)). Polar residues-rich tracts occupy residues 146–155 (QSAGDINTIY), 165–174 (LSVSSQNPGR), and 219–232 (SAEN…QSLD). Disordered stretches follow at residues 146–184 (QSAG…YVPE) and 218–262 (SSAE…SDRE). At Ser-147 the chain carries Phosphoserine. Phosphoserine; by SGK1 is present on Ser-166. Residues Ser-250 and Ser-312 each carry the phosphoserine modification. The residue at position 337 (Ser-337) is a Phosphoserine; by SGK1. Ser-340 is modified (phosphoserine). A Protein kinase domain is found at 362 to 622 (WRRGKLLGQG…AEELLTHHFA (261 aa)). Residues 368 to 376 (LGQGAFGRV) and Lys-391 contribute to the ATP site. The active-site Proton acceptor is the Asp-489.

The protein belongs to the protein kinase superfamily. STE Ser/Thr protein kinase family. MAP kinase kinase kinase subfamily. In terms of assembly, binds both upstream activators and downstream substrates in multimolecular complexes. Part of a complex with MAP2K3, RAC1 and CCM2. Interacts with MAP2K5 and SPAG9. Mg(2+) is required as a cofactor. Phosphorylation at Ser-166 and Ser-337 by SGK1 inhibits its activity.

It catalyses the reaction L-seryl-[protein] + ATP = O-phospho-L-seryl-[protein] + ADP + H(+). It carries out the reaction L-threonyl-[protein] + ATP = O-phospho-L-threonyl-[protein] + ADP + H(+). Its activity is regulated as follows. Activated by phosphorylation on Thr-530. Component of a protein kinase signal transduction cascade. Mediates activation of the NF-kappa-B, AP1 and DDIT3 transcriptional regulators. The polypeptide is Mitogen-activated protein kinase kinase kinase 3 (MAP3K3) (Homo sapiens (Human)).